Here is a 392-residue protein sequence, read N- to C-terminus: 2-oxoisovalerate dehydrogenase subunit beta, mitochondrial (392 aa).

Residues 1 to 50 (MAVVAAAAGWLLRLRAAGAEGHWRRLPGAGLARGFLHPAATVEDAAQRRQ) constitute a mitochondrion transit peptide. Tyr-152 is a binding site for thiamine diphosphate. Positions 178, 180, 181, 228, and 231 each coordinate K(+). The residue at position 232 (Lys-232) is an N6-acetyllysine. Residue Asn-233 coordinates K(+). At Lys-241 the chain carries N6-acetyllysine.

Heterotetramer of 2 alpha/BCKDHA and 2 beta chains/BCKDHB that forms the branched-chain alpha-keto acid decarboxylase (E1) component of the BCKD complex. The branched-chain alpha-ketoacid dehydrogenase is a large complex composed of three major building blocks E1, E2 and E3. It is organized around E2, a 24-meric cubic core composed of DBT, to which are associated 6 to 12 copies of E1, and approximately 6 copies of the dehydrogenase E3, a DLD dimer. Thiamine diphosphate is required as a cofactor.

It is found in the mitochondrion matrix. It carries out the reaction N(6)-[(R)-lipoyl]-L-lysyl-[protein] + 3-methyl-2-oxobutanoate + H(+) = N(6)-[(R)-S(8)-2-methylpropanoyldihydrolipoyl]-L-lysyl-[protein] + CO2. Together with BCKDHA forms the heterotetrameric E1 subunit of the mitochondrial branched-chain alpha-ketoacid dehydrogenase (BCKD) complex. The BCKD complex catalyzes the multi-step oxidative decarboxylation of alpha-ketoacids derived from the branched-chain amino-acids valine, leucine and isoleucine producing CO2 and acyl-CoA which is subsequently utilized to produce energy. The E1 subunit catalyzes the first step with the decarboxylation of the alpha-ketoacid forming an enzyme-product intermediate. A reductive acylation mediated by the lipoylamide cofactor of E2 extracts the acyl group from the E1 active site for the next step of the reaction. The protein is 2-oxoisovalerate dehydrogenase subunit beta, mitochondrial of Homo sapiens (Human).